A 168-amino-acid chain; its full sequence is MRIYLIGFMCSGKSTVGSLLSRSLNIPFYDVDEEVQKREGLSIPQIFEKKGEAYFRKLEFEVLKDLSEKENVVISTGGGLGANEEALNFMKSRGTTVFIDIPFEVFLERCKDSKERPLLKRPLDEIKNLFEERRKIYSKADIKVKGEKPPEEVVKEILLSLEGNALGG.

10-15 lines the ATP pocket; the sequence is CSGKST. Residue Ser14 coordinates Mg(2+). Residues Asp32, Arg56, and Gly78 each contribute to the substrate site. Arg116 is a binding site for ATP. Arg133 contributes to the substrate binding site.

Belongs to the shikimate kinase family. Monomer. Mg(2+) serves as cofactor.

It localises to the cytoplasm. It catalyses the reaction shikimate + ATP = 3-phosphoshikimate + ADP + H(+). The protein operates within metabolic intermediate biosynthesis; chorismate biosynthesis; chorismate from D-erythrose 4-phosphate and phosphoenolpyruvate: step 5/7. Catalyzes the specific phosphorylation of the 3-hydroxyl group of shikimic acid using ATP as a cosubstrate. This is Shikimate kinase from Aquifex aeolicus (strain VF5).